The chain runs to 418 residues: MDQNLSGLDCLSEPDEKRWPDGKRKRKNSQCMGKSGMSGDSLVSLPPAGYIPSYLDKDEPCVVCSDKATGYHYRCITCEGCKGFFRRTIQKNLHPSYSCKYDGCCIIDKITRNQCQLCRFKKCIAVGMAMDLVLDDSKRVAKRKLIEENRVRRRKEEMIKTLQQRPEPSSEEWELIRIVTEAHRSTNAQGSHWKQRRKFLPEDIGQSPMASMPDGDKVDLEAFSEFTKIITPAITRVVDFAKKLPMFSELTCEDQIILLKGCCMEIMSLRAAVRYDPDSETLTLSGEMAVKREQLKNGGLGVVSDAIFDLGRSLAAFNLDDTEVALLQAVLLMSSDRTGLICTDKIEKCQETYLLAFEHYINHRKHNIPHFWPKLLMKVTDLRMIGACHASRFLHMKVECPTELFPPLFLEVFEDQEV.

Residues 1–40 (MDQNLSGLDCLSEPDEKRWPDGKRKRKNSQCMGKSGMSGD) are disordered. Positions 1–60 (MDQNLSGLDCLSEPDEKRWPDGKRKRKNSQCMGKSGMSGDSLVSLPPAGYIPSYLDKDEP) are modulating. 2 NR C4-type zinc fingers span residues 61 to 81 (CVVC…CEGC) and 99 to 123 (CKYD…FKKC). The segment at residues 61-128 (CVVCSDKATG…RFKKCIAVGM (68 aa)) is a DNA-binding region (nuclear receptor). Residues 171–415 (EEWELIRIVT…PPLFLEVFED (245 aa)) enclose the NR LBD domain.

It belongs to the nuclear hormone receptor family. NR1 subfamily. In terms of assembly, binds to thyroid hormone receptor element (TRE) weakly as homodimers and monomers, but binds TRE with much higher affinity as heterodimers with retinoid X receptors. Can bind DNA as a heterodimer with either rxra or rxrg.

Its subcellular location is the nucleus. High affinity receptor for triiodothyronine (T3). The protein is Thyroid hormone receptor alpha-B (thra-b) of Xenopus laevis (African clawed frog).